A 493-amino-acid polypeptide reads, in one-letter code: Cysteine--tRNA ligase (493 aa).

A Zn(2+)-binding site is contributed by cysteine 31. The short motif at 33-43 is the 'HIGH' region element; that stretch reads PTVYGDAHLGH. Zn(2+) contacts are provided by cysteine 226, histidine 251, and glutamate 255. The short motif at 283 to 287 is the 'KMSKS' region element; sequence KMGKS. Lysine 286 contributes to the ATP binding site.

Belongs to the class-I aminoacyl-tRNA synthetase family. Monomer. Zn(2+) serves as cofactor.

The protein resides in the cytoplasm. The enzyme catalyses tRNA(Cys) + L-cysteine + ATP = L-cysteinyl-tRNA(Cys) + AMP + diphosphate. This Bacteroides thetaiotaomicron (strain ATCC 29148 / DSM 2079 / JCM 5827 / CCUG 10774 / NCTC 10582 / VPI-5482 / E50) protein is Cysteine--tRNA ligase.